A 157-amino-acid polypeptide reads, in one-letter code: Ribosomal RNA large subunit methyltransferase H (157 aa).

S-adenosyl-L-methionine contacts are provided by residues Gly104 and Leu123–Leu128.

This sequence belongs to the RNA methyltransferase RlmH family. Homodimer.

The protein localises to the cytoplasm. The catalysed reaction is pseudouridine(1915) in 23S rRNA + S-adenosyl-L-methionine = N(3)-methylpseudouridine(1915) in 23S rRNA + S-adenosyl-L-homocysteine + H(+). In terms of biological role, specifically methylates the pseudouridine at position 1915 (m3Psi1915) in 23S rRNA. In Nitrosococcus oceani (strain ATCC 19707 / BCRC 17464 / JCM 30415 / NCIMB 11848 / C-107), this protein is Ribosomal RNA large subunit methyltransferase H.